The chain runs to 129 residues: L5 homolog (129 aa).

A helical; Signal-anchor for type III membrane protein membrane pass occupies residues 27–47 (YFYILVFEVIVALIILNFFFK). Cys76 and Cys106 are disulfide-bonded.

Belongs to the chordopoxvirinae L5 family. In terms of assembly, part of a stable entry-fusion complex (EFC) which is at least composed of proteins A16, A21, A28, G3, G9, H2, J5, and L5. Formation of the viral membrane is necessary for the assembly of the complex. Interacts with G3. In terms of processing, most cysteines are linked by disulfide bonds. They are created by the viral disulfide bond formation pathway, a poxvirus-specific redox pathway that operates on the cytoplasmic side of the MV membranes.

The protein localises to the virion membrane. Envelope protein part of the entry-fusion complex responsible for the virus membrane fusion with host cell membrane during virus entry. Also plays a role in cell-cell fusion (syncytium formation). In Fowlpox virus (strain NVSL) (FPV), this protein is L5 homolog.